Consider the following 747-residue polypeptide: H(+)/Cl(-) exchange transporter 4 (747 aa).

The interval 1–50 (MDFLDEPFPDVGTYEDFHTIDWLREKSRDTDRHRKITSKSKESIWEFIKS) is required for localization in the endoplasmic reticulum. The Cytoplasmic segment spans residues 1–54 (MDFLDEPFPDVGTYEDFHTIDWLREKSRDTDRHRKITSKSKESIWEFIKSLLDA). Transmembrane regions (helical) follow at residues 55-92 (WSGWVVMLLIGLLAGTLAGVIDLAVDWMTDLKEGVCLS) and 138-161 (LNYLMYILWALLFAFLAVSLVRVF). The Selectivity filter part_1 signature appears at 167–171 (GSGIP). Residue Ser-168 participates in chloride binding. An intramembrane region (helical) is located at residues 170–177 (IPEIKTIL). The next 2 membrane-spanning stretches (helical) occupy residues 187 to 205 (GKWTLLIKTVTLVLVVSSG) and 211 to 230 (EGPLVHVACCCGNFFSSLFS). The Selectivity filter part_2 signature appears at 209-213 (GKEGP). 2 consecutive intramembrane regions (helical) follow at residues 242-254 (VLSAAAAAGVSVA) and 258-266 (PIGGVLFSL). 5 helical membrane-spanning segments follow: residues 278 to 296 (LWRSFFAALVAAFTLRSIN), 320 to 345 (FPFILLGVFGGLWGTVFTRCNIAWCR), 352 to 372 (LGKYPVLEVIVVTAITAIIAY), 429 to 449 (MWQLALALIFKIVITIFTFGM), and 454 to 473 (GLFIPSMAVGAMAGRMVGIG). Residues 454-458 (GLFIP) carry the Selectivity filter part_3 motif. Chloride is bound at residue Phe-456. 2 consecutive intramembrane regions (helical) follow at residues 501 to 515 (GLYAMVGAAACLGGV) and 519 to 530 (TVSLVVIMFELT). Positions 531–534 (GGLE) form an intramembrane region, note=Loop between two helices. The helical transmembrane segment at 535 to 553 (YIVPLMAAAVTSKWVADAF) threads the bilayer. The Cytoplasmic segment spans residues 554–747 (GKEGIYEAHI…NQDPESIIFN (194 aa)). Tyr-559 lines the chloride pocket. Positions 587–653 (MRPRRGEPPL…AIKNARQRQE (67 aa)) constitute a CBS 1 domain. Residues Ser-597 and 618-620 (YNG) each bind ATP. A required for localization in the endoplasmic reticulum region spans residues 654-683 (GIVSNSIMYFTEEPPELPANSPHPLKLRRI). Positions 684–742 (LNLSPFTVTDHTPMETVVDIFRKLGLRQCLVTRSGRLLGIITKKDVLRHMAQMANQDPE) constitute a CBS 2 domain. An ATP-binding site is contributed by 725-728 (TKKD).

This sequence belongs to the chloride channel (TC 2.A.49) family. ClC-4/CLCN4 subfamily. Strongly expressed in liver and brain, but also in heart, muscle, kidney and spleen.

The protein resides in the early endosome membrane. Its subcellular location is the late endosome membrane. The protein localises to the endoplasmic reticulum membrane. It localises to the lysosome membrane. It is found in the recycling endosome membrane. In terms of biological role, strongly outwardly rectifying, electrogenic H(+)/Cl(-)exchanger which mediates the exchange of chloride ions against protons. The CLC channel family contains both chloride channels and proton-coupled anion transporters that exchange chloride or another anion for protons. The presence of conserved gating glutamate residues is typical for family members that function as antiporters. This Rattus norvegicus (Rat) protein is H(+)/Cl(-) exchange transporter 4 (Clcn4).